The sequence spans 386 residues: Queuine tRNA-ribosyltransferase (386 aa).

Catalysis depends on Asp-99, which acts as the Proton acceptor. Substrate contacts are provided by residues 99-103, Asp-153, Gln-198, and Gly-225; that span reads DSGGF. The RNA binding stretch occupies residues 256–262; that stretch reads GVGKPED. The Nucleophile role is filled by Asp-275. The interval 280 to 284 is RNA binding; important for wobble base 34 recognition; sequence TRNAR. Cys-313, Cys-315, Cys-318, and His-344 together coordinate Zn(2+).

The protein belongs to the queuine tRNA-ribosyltransferase family. Homodimer. Within each dimer, one monomer is responsible for RNA recognition and catalysis, while the other monomer binds to the replacement base PreQ1. Requires Zn(2+) as cofactor.

It carries out the reaction 7-aminomethyl-7-carbaguanine + guanosine(34) in tRNA = 7-aminomethyl-7-carbaguanosine(34) in tRNA + guanine. The protein operates within tRNA modification; tRNA-queuosine biosynthesis. Catalyzes the base-exchange of a guanine (G) residue with the queuine precursor 7-aminomethyl-7-deazaguanine (PreQ1) at position 34 (anticodon wobble position) in tRNAs with GU(N) anticodons (tRNA-Asp, -Asn, -His and -Tyr). Catalysis occurs through a double-displacement mechanism. The nucleophile active site attacks the C1' of nucleotide 34 to detach the guanine base from the RNA, forming a covalent enzyme-RNA intermediate. The proton acceptor active site deprotonates the incoming PreQ1, allowing a nucleophilic attack on the C1' of the ribose to form the product. After dissociation, two additional enzymatic reactions on the tRNA convert PreQ1 to queuine (Q), resulting in the hypermodified nucleoside queuosine (7-(((4,5-cis-dihydroxy-2-cyclopenten-1-yl)amino)methyl)-7-deazaguanosine). This chain is Queuine tRNA-ribosyltransferase, found in Acinetobacter baylyi (strain ATCC 33305 / BD413 / ADP1).